The sequence spans 644 residues: NADH-ubiquinone oxidoreductase chain 5 (644 aa).

A run of 18 helical transmembrane segments spans residues 4 to 23, 30 to 49, 78 to 100, 112 to 129, 133 to 155, 167 to 189, 199 to 221, 234 to 256, 271 to 293, 300 to 322, 327 to 349, 361 to 383, 398 to 420, 466 to 488, 517 to 539, 546 to 568, 594 to 616, and 623 to 642; these read FITLPLLNVIISGLLSRYIG, LNIINLFIILILLIYYYINI, DLLSITMLIPIILISLIVNIFAW, FYTYLALFTLFMIILVLG, LILFLGWEYIGIASFLLIGFWYN, LFINKIGDIFFIIALIYLIYIYK, LVSYINIDINNIIILCLVIAASA, WAMAGPTPVSVLLHAATLVIAGI, NILLFNLWLGAITSLISGLIAIN, IIALSTMSQLGIMFISIGLSSYN, HVLCHSLYKALLFICAGTIIHSL, GLLIYMPITYICMLIGSLSLMGL, SSIGIFTISGLIIYWLVVLSSLL, SWMAIICMIILSIGSLFIGYLLQ, INIYYKWIPIFNIFISILLIIYL, LLYIYNNPLFYNFYILFNTRFLF, GFLYTLGPNGLNYLLNLLSFNII, and FNHYLIYISFSLLLFIYLQF.

It belongs to the complex I subunit 5 family.

It localises to the mitochondrion inner membrane. The catalysed reaction is a ubiquinone + NADH + 5 H(+)(in) = a ubiquinol + NAD(+) + 4 H(+)(out). In terms of biological role, core subunit of the mitochondrial membrane respiratory chain NADH dehydrogenase (Complex I) that is believed to belong to the minimal assembly required for catalysis. Complex I functions in the transfer of electrons from NADH to the respiratory chain. The immediate electron acceptor for the enzyme is believed to be ubiquinone. This chain is NADH-ubiquinone oxidoreductase chain 5 (ND5), found in Wickerhamomyces canadensis (Yeast).